A 1045-amino-acid polypeptide reads, in one-letter code: Pre-mRNA-splicing factor ATP-dependent RNA helicase DHX16 (1045 aa).

The segment at 101 to 211 (EDSEESSEEA…ERSDKKAYEE (111 aa)) is disordered. Serine 103, serine 106, and serine 107 each carry phosphoserine. Basic residues predominate over residues 119–131 (QKKRKKRKHLRKK). The span at 135-144 (EEEEEEEEEV) shows a compositional bias: acidic residues. Serine 164 is subject to Phosphoserine. Residues 170–211 (RTERERLQDLEERDAFAERVRQRDKDRTRNVLERSDKKAYEE) are compositionally biased toward basic and acidic residues. Residues 413 to 577 (LAAVANHQIL…FDDAPVFRIP (165 aa)) enclose the Helicase ATP-binding domain. 426–433 (GETGSGKT) is a binding site for ATP. Residues 524–527 (DEAH) carry the DEAH box motif. Residues 602–775 (SVLQIHVTQP…NVVLLLKSLG (174 aa)) enclose the Helicase C-terminal domain. A Phosphothreonine modification is found at threonine 716. The segment at 1026 to 1045 (EDPHAKKMPKKTGKTREELG) is disordered.

The protein belongs to the DEAD box helicase family. DEAH subfamily. DDX16/PRP8 sub-subfamily. As to quaternary structure, component of pre-catalytic spliceosome complexes. Component of the minor spliceosome, which splices U12-type introns. Interacts with GPKOW. Interacts with TRIM6. Interacts with RIGI.

The protein resides in the nucleus. It is found in the nucleoplasm. It localises to the cytoplasm. It carries out the reaction ATP + H2O = ADP + phosphate + H(+). Its function is as follows. Required for pre-mRNA splicing as a component of the spliceosome. Contributes to pre-mRNA splicing after spliceosome formation and prior to the first transesterification reaction. As a component of the minor spliceosome, involved in the splicing of U12-type introns in pre-mRNAs. Also plays a role in innate antiviral response by acting as a pattern recognition receptor sensing splicing signals in viral RNA. Mechanistically, TRIM6 promotes the interaction between unanchored 'Lys-48'-polyubiquitin chains and DHX16, leading to DHX16 interaction with RIGI and ssRNA to amplify RIGI-dependent innate antiviral immune responses. The chain is Pre-mRNA-splicing factor ATP-dependent RNA helicase DHX16 (DHX16) from Sus scrofa (Pig).